The primary structure comprises 295 residues: 4-hydroxy-tetrahydrodipicolinate synthase (295 aa).

Threonine 46 is a binding site for pyruvate. Tyrosine 134 (proton donor/acceptor) is an active-site residue. Catalysis depends on lysine 162, which acts as the Schiff-base intermediate with substrate. Valine 204 contributes to the pyruvate binding site.

This sequence belongs to the DapA family. As to quaternary structure, homotetramer; dimer of dimers.

It is found in the cytoplasm. The catalysed reaction is L-aspartate 4-semialdehyde + pyruvate = (2S,4S)-4-hydroxy-2,3,4,5-tetrahydrodipicolinate + H2O + H(+). The protein operates within amino-acid biosynthesis; L-lysine biosynthesis via DAP pathway; (S)-tetrahydrodipicolinate from L-aspartate: step 3/4. Functionally, catalyzes the condensation of (S)-aspartate-beta-semialdehyde [(S)-ASA] and pyruvate to 4-hydroxy-tetrahydrodipicolinate (HTPA). The polypeptide is 4-hydroxy-tetrahydrodipicolinate synthase (Oceanobacillus iheyensis (strain DSM 14371 / CIP 107618 / JCM 11309 / KCTC 3954 / HTE831)).